Consider the following 471-residue polypeptide: UTP--glucose-1-phosphate uridylyltransferase (471 aa).

UTP contacts are provided by residues Leu-87–Gly-90, Lys-101, Gln-164, and Gly-193. Gly-89 to Gly-90 contacts substrate. Residues His-194 and Asn-222–Asp-224 each bind substrate. 2 residues coordinate UTP: Asp-224 and Lys-362.

Belongs to the UDPGP type 1 family.

The protein resides in the cytoplasm. The enzyme catalyses alpha-D-glucose 1-phosphate + UTP + H(+) = UDP-alpha-D-glucose + diphosphate. Plays a central role as a glucosyl donor in cellular metabolic pathways. This is UTP--glucose-1-phosphate uridylyltransferase from Pyrus pyrifolia (Chinese pear).